A 219-amino-acid polypeptide reads, in one-letter code: Translation initiation factor IF-3 (219 aa).

The protein belongs to the IF-3 family. As to quaternary structure, monomer.

The protein localises to the cytoplasm. In terms of biological role, IF-3 binds to the 30S ribosomal subunit and shifts the equilibrium between 70S ribosomes and their 50S and 30S subunits in favor of the free subunits, thus enhancing the availability of 30S subunits on which protein synthesis initiation begins. The sequence is that of Translation initiation factor IF-3 from Prochlorococcus marinus (strain MIT 9313).